Reading from the N-terminus, the 278-residue chain is MTFEPSETLRDPFVLYGESFGSRLLLGTARYPSPATLEAAVQASRPAMITVALRRQGAVGAGEGGQAFWQMLKALDVPVLPNTAGCFTAQEVITTAMMAREVFETPWIKLELIGDDYTLQPDTLNLPAVAETLIKEGFKVLPYCTEDLVLCRRLLDVGCQALMPWAAPIGTGRGAVNPHAMRVLRERLPDTPLIVDAGLGLPSHAAQVLEWGYDGVLLNTAVAQAAYPVNMARAFAQAVEAGRTAYLAGPMPEREVAQASTPVVGMPFWHADSTEQRA.

Lysine 109 (schiff-base intermediate with DXP) is an active-site residue. 1-deoxy-D-xylulose 5-phosphate is bound by residues glycine 170, 197-198, and 219-220; these read AG and NT.

This sequence belongs to the ThiG family. Homotetramer. Forms heterodimers with either ThiH or ThiS.

It is found in the cytoplasm. It carries out the reaction [ThiS sulfur-carrier protein]-C-terminal-Gly-aminoethanethioate + 2-iminoacetate + 1-deoxy-D-xylulose 5-phosphate = [ThiS sulfur-carrier protein]-C-terminal Gly-Gly + 2-[(2R,5Z)-2-carboxy-4-methylthiazol-5(2H)-ylidene]ethyl phosphate + 2 H2O + H(+). The protein operates within cofactor biosynthesis; thiamine diphosphate biosynthesis. Functionally, catalyzes the rearrangement of 1-deoxy-D-xylulose 5-phosphate (DXP) to produce the thiazole phosphate moiety of thiamine. Sulfur is provided by the thiocarboxylate moiety of the carrier protein ThiS. In vitro, sulfur can be provided by H(2)S. The sequence is that of Thiazole synthase from Cupriavidus necator (strain ATCC 17699 / DSM 428 / KCTC 22496 / NCIMB 10442 / H16 / Stanier 337) (Ralstonia eutropha).